Reading from the N-terminus, the 363-residue chain is Trichothecene biosynthesis protein 14 (363 aa).

The protein belongs to the TRI14 family.

Functionally, part of the gene cluster that mediates the production of the antimicrobial trichothecene harzianum A (HA) that plays a role in Botrytis cinerea antagonistic activity and plant defense priming. The biosynthesis of harzianum A begins with the cyclization of farnesyl diphosphate to trichodiene and is catalyzed by the trichodiene synthase TRI5. Trichodiene undergoes a series of oxygenations catalyzed by the cytochrome P450 monooxygenase TRI4. TRI4 controls the addition of 3 oxygens at C-2, C-11, and the C-12, C-13-epoxide to form the intermediate isotrichodiol. Isotrichodiol then undergoes a non-enzymatic isomerization and cyclization to form 12,13-epoxytrichothec-9-ene (EPT) which is further converted to trichodermol by the cytochrome P450 monooxygenase TRI11 via C-4 hydroxylation. The last step of HA synthesis is esterification of an octatriendioyl moiety to the C-4 oxygen of trichodermol. The octatriendioyl moiety is probably produced by the polyketide synthase TRI17 and the esterification performed by the trichothecene O-acetyltransferase TRI3. This Trichoderma arundinaceum protein is Trichothecene biosynthesis protein 14.